A 361-amino-acid chain; its full sequence is MKALAKLRPEEGIWMMDAPMPELGHNDIMIKIRKSAICGTDVHIYNWDEWSQKTIPVPMVVGHEYVGEIVAIGQEVNGFHIGDRVSGEGHITCGYCRNCRAGRRHLCRNAIGVGVNRPGSFAEYLVIPAYNAFRIPDNISDELAAIFDPFGNAVHTALSFDLVGEDVLITGAGPIGMMAAAVCRHVGARNVVITDVNAYRLELASKMGATRAVNVAEEKLTDVMIELGMTEGFDIGLEMSGAPSAFRAMLKAMNHGGRIAMLGIPHEPMSIDWGEVIFKGLFIKGIYGREMFETWYKMSALIQSGLDLSPIITHRFHIDEFQKGFDAMRSGQSGKVILNWDEAYTRHTSSCMCVDCATRHT.

Cys-38 lines the Zn(2+) pocket. Catalysis depends on charge relay system residues Thr-40 and His-43. Residues His-63, Glu-64, Cys-93, Cys-96, Cys-99, and Cys-107 each coordinate Zn(2+). NAD(+) is bound by residues Ile-175, Asp-195, Arg-200, 262–264 (LGI), and 286–287 (IY).

Belongs to the zinc-containing alcohol dehydrogenase family. As to quaternary structure, homotetramer. The cofactor is Zn(2+).

It localises to the cytoplasm. The enzyme catalyses L-threonine + NAD(+) = (2S)-2-amino-3-oxobutanoate + NADH + H(+). The protein operates within amino-acid degradation; L-threonine degradation via oxydo-reductase pathway; glycine from L-threonine: step 1/2. Catalyzes the NAD(+)-dependent oxidation of L-threonine to 2-amino-3-ketobutyrate. The sequence is that of L-threonine 3-dehydrogenase from Pectobacterium atrosepticum (strain SCRI 1043 / ATCC BAA-672) (Erwinia carotovora subsp. atroseptica).